The chain runs to 97 residues: Mitochondrial import inner membrane translocase subunit Tim8 A (97 aa).

The Twin CX3C motif signature appears at 43–66 (CWEKCMDKPGPKLDSRAEACFVNC). 2 cysteine pairs are disulfide-bonded: Cys-43–Cys-66 and Cys-47–Cys-62. 4 positions are modified to phosphoserine: Ser-57, Ser-87, Ser-94, and Ser-96.

It belongs to the small Tim family. In terms of assembly, heterohexamer; composed of 3 copies of TIMM8A and 3 copies of TIMM13, named soluble 70 kDa complex. Associates with the TIM22 complex, whose core is composed of TIMM22. In terms of tissue distribution, present at high level in liver and brain, and at lower level in muscle and heart. In CNS sections, it is predominantly present in the soma and the dendritic portion of the Purkinje cells of the cerebellum, but not in the glial cells. Scattered expression also is also detected in the brain stem, olfactory bulb, substantia nigra, hippocampus and striatum (at protein level). Ubiquitously expressed.

The protein localises to the mitochondrion inner membrane. In terms of biological role, mitochondrial intermembrane chaperone that participates in the import and insertion of some multi-pass transmembrane proteins into the mitochondrial inner membrane. Also required for the transfer of beta-barrel precursors from the TOM complex to the sorting and assembly machinery (SAM complex) of the outer membrane. Acts as a chaperone-like protein that protects the hydrophobic precursors from aggregation and guide them through the mitochondrial intermembrane space. The TIMM8-TIMM13 complex mediates the import of proteins such as TIMM23, SLC25A12/ARALAR1 and SLC25A13/ARALAR2, while the predominant TIMM9-TIMM10 70 kDa complex mediates the import of much more proteins. The protein is Mitochondrial import inner membrane translocase subunit Tim8 A (Timm8a1) of Mus musculus (Mouse).